We begin with the raw amino-acid sequence, 182 residues long: ATP-dependent protease subunit HslV (182 aa).

Thr12 is an active-site residue. Residues Ala167, Cys170, and Thr173 each coordinate Na(+).

This sequence belongs to the peptidase T1B family. HslV subfamily. As to quaternary structure, a double ring-shaped homohexamer of HslV is capped on each side by a ring-shaped HslU homohexamer. The assembly of the HslU/HslV complex is dependent on binding of ATP.

It is found in the cytoplasm. The catalysed reaction is ATP-dependent cleavage of peptide bonds with broad specificity.. Allosterically activated by HslU binding. In terms of biological role, protease subunit of a proteasome-like degradation complex believed to be a general protein degrading machinery. The polypeptide is ATP-dependent protease subunit HslV (Prosthecochloris aestuarii (strain DSM 271 / SK 413)).